A 436-amino-acid polypeptide reads, in one-letter code: Transcriptional regulator VdtR (436 aa).

The zn(2)-C6 fungal-type DNA-binding region spans 17-44; sequence CDRCSANKVKCTQEKPECERCRLLSLPC. 2 disordered regions span residues 51–147 and 173–192; these read RIGK…HDKG and TARE…EYSD. Residues 125 to 141 are compositionally biased toward polar residues; it reads SHNSNRPTNMASTNQDQ. The segment covering 174 to 192 has biased composition (basic and acidic residues); that stretch reads AREDQKQHPELRSEEEYSD.

It localises to the nucleus. Transcription factor that regulates expression of the viriditoxin biosynthesis cluster and viriditoxin synthesis. This chain is Transcriptional regulator VdtR, found in Byssochlamys spectabilis (Paecilomyces variotii).